Reading from the N-terminus, the 208-residue chain is V-type ATP synthase subunit D (208 aa).

Belongs to the V-ATPase D subunit family.

Produces ATP from ADP in the presence of a proton gradient across the membrane. This is V-type ATP synthase subunit D from Chlamydia caviae (strain ATCC VR-813 / DSM 19441 / 03DC25 / GPIC) (Chlamydophila caviae).